Reading from the N-terminus, the 108-residue chain is Iron-sulfur cluster assembly protein CyaY (108 aa).

Belongs to the frataxin family.

Functionally, involved in iron-sulfur (Fe-S) cluster assembly. May act as a regulator of Fe-S biogenesis. The sequence is that of Iron-sulfur cluster assembly protein CyaY from Burkholderia mallei (strain NCTC 10247).